The chain runs to 644 residues: Fidgetin-like protein 2 (644 aa).

2 disordered regions span residues 1–36 and 285–323; these read MHWT…ELPP and AADG…GGGG. The segment covering 10 to 27 has biased composition (polar residues); sequence PLNQWPEQHLDVSSTTPS. A compositionally biased stretch (low complexity) spans 285–294; it reads AADGASYPAA. Residues alanine 390 and 430 to 435 each bind ATP; that span reads GCGKAL.

This sequence belongs to the AAA ATPase family. Mg(2+) serves as cofactor.

It localises to the cytoplasm. It is found in the cell cortex. It carries out the reaction ATP + H2O = ADP + phosphate + H(+). Functionally, microtubule-severing enzyme that negatively regulates cell migration and wound healing. In migrating cells, targets dynamic microtubules (MTs) at the leading edge and severs them, thereby suppressing motility. Microtubule severing releases ARHGEF2 which activates RHOA, which in turn regulates focal ahesion turnover via focal adhesion kinase, as opposed to F-actin polymerization, to suppress cell motility. Negative regulator of axon regeneration that suppresses axonal growth by selectively severing dynamic MTs in the distal axon shaft and growth cone. Contributes to proper cell branching during endothelial and neuronal development. The chain is Fidgetin-like protein 2 (Fignl2) from Mus musculus (Mouse).